Here is a 590-residue protein sequence, read N- to C-terminus: Conglutin beta 4 (590 aa).

An N-terminal signal peptide occupies residues Met-1 to Gly-30. The span at His-38–Glu-105 shows a compositional bias: basic and acidic residues. The segment at His-38 to Tyr-175 is disordered. Positions Gln-137–Gln-146 are enriched in low complexity. Residues Tyr-174–Gln-332 enclose the Cupin type-1 1 domain. Residue Asn-239 is glycosylated (N-linked (GlcNAc...) asparagine). Disordered stretches follow at residues Asp-340–Val-362 and Lys-374–Asn-396. Residues Glu-346 to Val-362 show a composition bias toward basic and acidic residues. One can recognise a Cupin type-1 2 domain in the interval Phe-391–Glu-548. A glycan (N-linked (GlcNAc...) asparagine) is linked at Asn-498. The segment at Phe-559–Arg-579 is disordered.

Belongs to the 7S seed storage protein family. As to quaternary structure, component of globulins complexes which accumulate in seeds.

Its function is as follows. Seed storage protein. Accumulates during seed development and is hydrolyzed after germination to provide a carbon and nitrogen source for the developing seedling. This is Conglutin beta 4 from Lupinus angustifolius (Narrow-leaved blue lupine).